We begin with the raw amino-acid sequence, 84 residues long: Apovitellenin-1 (84 aa).

Belongs to the apovitellenin family. Monomer.

Protein component of the very low density lipoprotein (VLDL) of egg-laying females. Potent lipoprotein lipase inhibitor, preventing the loss of triglycerides from VLDL on their way from the liver to the growing oocytes. The chain is Apovitellenin-1 from Dromaius novaehollandiae (Emu).